Here is a 1294-residue protein sequence, read N- to C-terminus: Leucine-rich repeat receptor protein kinase MSP1 (1294 aa).

The signal sequence occupies residues 1 to 22 (MVSNSFWLFILLVSFIPISAWA). 5 LRR repeats span residues 88 to 112 (FQSL…LGNL), 113 to 136 (QNLQ…LYNL), 138 to 160 (MLKE…IAQL), 161 to 184 (QHLT…LGSL), and 186 to 207 (NLEL…TFGN). N198, N207, and N220 each carry an N-linked (GlcNAc...) asparagine glycan. LRR repeat units follow at residues 232–256 (LTNL…IGQL), 258–280 (NLEL…IGSL), 282–304 (QLKL…ISGL), 305–328 (SSLT…MGEL), 330–352 (NLTQ…LGNC), 353–376 (KKLT…FADL), 378–400 (AIVS…IQKW), 401–422 (KNAR…VLPL), 423–446 (QHLL…ICQA), 447–469 (NSLH…AFKG), 471–493 (TNLT…YLAE), 494–517 (LPLV…LWES), 519–541 (TLLE…IGKL), 542–565 (SVLQ…VGDL), 566–589 (RNLT…LFNC), 591–613 (KLAT…ISHL), 614–637 (TLLD…ICVG), 649–673 (LQHH…IKNC), 675–697 (MVMV…LGEL), 698–721 (TNLT…SGPL), 722–745 (VQLQ…IGQI), 746–770 (LPKI…LLCN), and 772–794 (YLNH…CPDG). Residues N330 and N359 are each glycosylated (N-linked (GlcNAc...) asparagine). N458 and N472 each carry an N-linked (GlcNAc...) asparagine glycan. Residues N567, N570, and N601 are each glycosylated (N-linked (GlcNAc...) asparagine). Residues N687, N699, and N704 are each glycosylated (N-linked (GlcNAc...) asparagine). N805, N821, and N832 each carry an N-linked (GlcNAc...) asparagine glycan. 2 LRR repeats span residues 822-846 (FTQL…LSDL) and 848-870 (SLNY…ICNI). Residues 917–937 (ITICAFTFVIIIVLVLLAVYL) form a helical membrane-spanning segment. One can recognise a Protein kinase domain in the interval 1002-1282 (FSKVHIIGDG…KGLKMTHGME (281 aa)). ATP contacts are provided by residues 1008–1016 (IGDGGFGTV) and K1030. Residue D1129 is the Proton acceptor of the active site.

The protein belongs to the protein kinase superfamily. Ser/Thr protein kinase family. In terms of assembly, interacts with TDL1A. In terms of tissue distribution, expressed in anthers and ovules during meiosis.

It localises to the cell membrane. It catalyses the reaction L-seryl-[protein] + ATP = O-phospho-L-seryl-[protein] + ADP + H(+). The catalysed reaction is L-threonyl-[protein] + ATP = O-phospho-L-threonyl-[protein] + ADP + H(+). Its function is as follows. Receptor-like kinase that plays important roles in restricting the number of cells entering into male and female sporogenesis. Involved in cell specification during anther development and initiation of anther wall formation. This is Leucine-rich repeat receptor protein kinase MSP1 from Oryza sativa subsp. japonica (Rice).